We begin with the raw amino-acid sequence, 424 residues long: Neurotensin receptor type 1 (424 aa).

The interval 1–23 (MHLNSSVPQGTPGEPDAQPFSGP) is disordered. The Extracellular segment spans residues 1–68 (MHLNSSVPQG…TDIYSKVLVT (68 aa)). Residues Asn4, Asn38, and Asn42 are each glycosylated (N-linked (GlcNAc...) asparagine). A helical transmembrane segment spans residues 69 to 89 (AIYLALFVVGTVGNSVTAFTL). Over 90 to 103 (ARKKSLQSLQSTVH) the chain is Cytoplasmic. Residues 104–123 (YHLGSLALSDLLILLLAMPV) form a helical membrane-spanning segment. The Extracellular portion of the chain corresponds to 124–143 (ELYNFIWVHHPWAFGDAGCR). The cysteines at positions 142 and 225 are disulfide-linked. A helical transmembrane segment spans residues 144-165 (GYYFLRDACTYATALNVASLSV). Residues 166–185 (ERYLAICHPFKAKTLMSRSR) lie on the Cytoplasmic side of the membrane. A helical transmembrane segment spans residues 186–206 (TKKFISAIWLASALLAIPMLF). The Extracellular portion of the chain corresponds to 207 to 235 (TMGLQNRSGDGTHPGGLVCTPIVDTATVK). A helical membrane pass occupies residues 236 to 260 (VVIQVNTFMSFLFPMLVISILNTVI). The Cytoplasmic segment spans residues 261–308 (ANKLTVMVHQAAEQGRVCTVGTHNGLEHSTFNMTIEPGRVQALRHGVL). Residues 309–330 (VLRAVVIAFVVCWLPYHVRRLM) form a helical membrane-spanning segment. The neurotensin binding stretch occupies residues 326–349 (VRRLMFCYISDEQWTTFLFDFYHY). The Extracellular segment spans residues 331–348 (FCYISDEQWTTFLFDFYH). A helical transmembrane segment spans residues 349-369 (YFYMLTNALFYVSSAINPILY). Topologically, residues 370–424 (NLVSANFRQVFLSTLACLCPGWRHRRKKRPTFSRKPNSMSSNHAFSTSATRETLY) are cytoplasmic. 2 S-palmitoyl cysteine lipidation sites follow: Cys386 and Cys388. Positions 397-424 (KRPTFSRKPNSMSSNHAFSTSATRETLY) are disordered. The span at 403 to 424 (RKPNSMSSNHAFSTSATRETLY) shows a compositional bias: polar residues.

The protein belongs to the G-protein coupled receptor 1 family. Neurotensin receptor subfamily. NTSR1 sub-subfamily. In terms of assembly, interacts (palmitoylated form) with GNA11. Post-translationally, N-glycosylated. Palmitoylated; this is required for normal localization at membrane rafts and normal GNA11-mediated activation of down-stream signaling cascades. The palmitoylation level increases in response to neurotensin treatment. Detected in brain and small intestine.

Its subcellular location is the cell membrane. It is found in the membrane raft. Its function is as follows. G-protein coupled receptor for the tridecapeptide neurotensin (NTS). Signaling is effected via G proteins that activate a phosphatidylinositol-calcium second messenger system. Signaling leads to the activation of downstream MAP kinases and protects cells against apoptosis. The chain is Neurotensin receptor type 1 (Ntsr1) from Rattus norvegicus (Rat).